The chain runs to 82 residues: ATP synthase subunit c, chloroplastic (82 aa).

2 consecutive transmembrane segments (helical) span residues 3 to 23 (PIIS…AAIG) and 57 to 77 (LAFM…LLFA).

It belongs to the ATPase C chain family. F-type ATPases have 2 components, F(1) - the catalytic core - and F(0) - the membrane proton channel. F(1) has five subunits: alpha(3), beta(3), gamma(1), delta(1), epsilon(1). F(0) has four main subunits: a(1), b(1), b'(1) and c(10-14). The alpha and beta chains form an alternating ring which encloses part of the gamma chain. F(1) is attached to F(0) by a central stalk formed by the gamma and epsilon chains, while a peripheral stalk is formed by the delta, b and b' chains.

It localises to the plastid. Its subcellular location is the chloroplast thylakoid membrane. F(1)F(0) ATP synthase produces ATP from ADP in the presence of a proton or sodium gradient. F-type ATPases consist of two structural domains, F(1) containing the extramembraneous catalytic core and F(0) containing the membrane proton channel, linked together by a central stalk and a peripheral stalk. During catalysis, ATP synthesis in the catalytic domain of F(1) is coupled via a rotary mechanism of the central stalk subunits to proton translocation. Its function is as follows. Key component of the F(0) channel; it plays a direct role in translocation across the membrane. A homomeric c-ring of between 10-14 subunits forms the central stalk rotor element with the F(1) delta and epsilon subunits. This Phaeodactylum tricornutum (strain CCAP 1055/1) protein is ATP synthase subunit c, chloroplastic.